Here is a 1338-residue protein sequence, read N- to C-terminus: Centrosomal P4.1-associated protein (1338 aa).

Disordered regions lie at residues 78–99 (QKLESNSPYKPQSDKSETHTGF) and 190–211 (GLSLLPDDQSQKHRSPGNTTTG). Phosphoserine occurs at positions 260 and 317. The interval 320 to 395 (VANIEERPIK…FTNAKSKFQK (76 aa)) is alpha/beta-tubulin binding. 3 disordered regions span residues 387–415 (TNAKSKFQKGKESKLVTNQSTSEDQPLFK), 437–480 (PILK…QTGK), and 522–552 (QGKDRLPLSTGPASRLAAKSPIRETMKESES). The span at 401-410 (LVTNQSTSED) shows a compositional bias: polar residues. Phosphoserine is present on Ser541. The segment covering 542–551 (PIRETMKESE) has biased composition (basic and acidic residues). 2 positions are modified to phosphoserine; by PLK2: Ser590 and Ser596. 3 disordered regions span residues 612–790 (HRMS…LSMS), 846–903 (VKRG…DNAR), and 1088–1158 (TQVE…HPDG). Positions 636–651 (NRSEDLDHTAREKESE) are enriched in basic and acidic residues. Over residues 680 to 690 (QKSTSENQTEW) the composition is skewed to polar residues. A compositionally biased stretch (basic and acidic residues) spans 718-765 (STEDRERGISSREDSPQVCDDKGPFKDTRTQEDKRRDVDLDLSDKDYS). Ser760 carries the post-translational modification Phosphoserine. Residues 781–790 (PSRSSSLSMS) are compositionally biased toward low complexity. The tract at residues 896 to 1338 (QPPGDNARSQ…EGNVLMDTEL (443 aa)) is interaction with STIL.

It belongs to the TCP10 family. In terms of assembly, forms homodimers. Associates with microtubules plus ends; binds to beta-tubulin subunits exposed on microtubule outer surface at its distal tip; also associates with microtubule lattice. Associated with the gamma-tubulin complex. Interacts with the head domain of EPB41. Interacts with LYST. Interacts with CEP152 (via C-terminus). Interacts with STIL. Forms a complex with STIL and SASS6. Post-translationally, phosphorylation at Ser-590 and Ser-596 by PLK2 is required for procentriole formation and centriole elongation. Phosphorylation by PLK2 oscillates during the cell cycle: it increases at G1/S transition and decreases during the exit from mitosis. Phosphorylation at Ser-596 is also mediated by PLK4 but is not a critical step in PLK4 function in procentriole assembly.

The protein localises to the cytoplasm. The protein resides in the cytoskeleton. It localises to the microtubule organizing center. It is found in the centrosome. Its subcellular location is the centriole. Functionally, plays an important role in cell division and centrosome function by participating in centriole duplication. Inhibits microtubule nucleation from the centrosome. Involved in the regulation of slow processive growth of centriolar microtubules. Acts as microtubule plus-end tracking protein that stabilizes centriolar microtubules and inhibits microtubule polymerization and extension from the distal ends of centrioles. Required for centriole elongation and for STIL-mediated centriole amplification. Required for the recruitment of CEP295 to the proximal end of new-born centrioles at the centriolar microtubule wall during early S phase in a PLK4-dependent manner. May be involved in the control of centriolar-microtubule growth by acting as a regulator of tubulin release. In Pan troglodytes (Chimpanzee), this protein is Centrosomal P4.1-associated protein (CPAP).